Here is a 227-residue protein sequence, read N- to C-terminus: PKHD-type hydroxylase M446_1130 (227 aa).

The region spanning glutamine 78–serine 178 is the Fe2OG dioxygenase domain. The Fe cation site is built by histidine 96, aspartate 98, and histidine 159. Arginine 169 contributes to the 2-oxoglutarate binding site.

It depends on Fe(2+) as a cofactor. L-ascorbate is required as a cofactor.

This chain is PKHD-type hydroxylase M446_1130, found in Methylobacterium sp. (strain 4-46).